Here is a 4454-residue protein sequence, read N- to C-terminus: E3 ubiquitin-protein ligase HUWE1 (4454 aa).

The disordered stretch occupies residues 521–575; that stretch reads RASSSNSSTSISGPGPGPGPGPGPGPGPGPGPGPGPGLGPSLGPGPGPGPRPGVQ. The span at 523-533 shows a compositional bias: low complexity; the sequence is SSSNSSTSISG. Residues 535–571 are compositionally biased toward pro residues; that stretch reads GPGPGPGPGPGPGPGPGPGPGPGLGPSLGPGPGPGPR. Phosphoserine occurs at positions 724 and 725. Disordered stretches follow at residues 781–834, 1054–1077, and 1094–1114; these read QKAD…VVGT, DEKA…AGSM, and TLAP…KSKI. The segment covering 801–811 has biased composition (acidic residues); it reads ASSEDEEEEEV. The span at 813–832 shows a compositional bias: polar residues; it reads AMQSFNSAQQNETEPNQQVV. Position 816 is a phosphoserine (serine 816). Serine 1160 is subject to Phosphoserine. Residues 1367–1378 are compositionally biased toward basic and acidic residues; that stretch reads LSKEKEGSRGEE. A disordered region spans residues 1367-1396; that stretch reads LSKEKEGSRGEEEAGQEEGGSRREPQVNQQ. Residues 1392–1431 form the UBA domain; sequence QVNQQQLQQLMDMGFTREHAMEALLNTSTMEQATEYLLTH. A phosphoserine mark is found at serine 1444, serine 1446, serine 1458, and serine 1471. The region spanning 1446-1465 is the UIM domain; it reads SEEDQMMRAIAMSLGQDIPM. Positions 1472–1491 are disordered; it reads PEEVACRKEEEERKAREKQE. The region spanning 1679–1756 is the WWE domain; sequence RAQMTKYLQS…ETGNRRPVML (78 aa). A disordered region spans residues 1766-1802; the sequence is KNSKSSNGQELEKTLEESKETDIKRKENKGNDIPLAL. The segment covering 1775–1795 has biased composition (basic and acidic residues); that stretch reads ELEKTLEESKETDIKRKENKG. Serine 1983 carries the post-translational modification Phosphoserine. Disordered regions lie at residues 2095 to 2142, 2339 to 2420, and 2433 to 2556; these read APAE…SKPL, SLFG…QEMQ, and LERD…ASPL. A compositionally biased stretch (low complexity) spans 2097–2112; it reads AETSTTGTSQGEGAST. Threonine 2112 is modified (phosphothreonine). Basic and acidic residues predominate over residues 2114–2134; it reads EETREGKKDKEGDRTSEEGKQ. Residues 2339-2368 are compositionally biased toward low complexity; that stretch reads SLFGSKSASSKSKSEQDAQGASQDSSSHQQ. Serine 2343 is modified (phosphoserine). The residue at position 2344 (lysine 2344) is an N6-acetyllysine. 2 stretches are compositionally biased toward acidic residues: residues 2372 to 2383 and 2391 to 2402; these read EPGEAEVQEEDH and ADGDIMDGEAET. Residues serine 2439, serine 2442, and serine 2468 each carry the phosphoserine modification. Positions 2465–2475 are enriched in polar residues; that stretch reads SNLSQASTLQA. Over residues 2485–2549 the composition is skewed to acidic residues; that stretch reads DPEDEEEHTQ…SEMELDEDYP (65 aa). Phosphoserine is present on residues serine 2604, serine 2609, and serine 2612. Phosphothreonine is present on threonine 2631. Phosphoserine is present on residues serine 2661, serine 2672, and serine 2696. The span at 2781–2793 shows a compositional bias: basic and acidic residues; that stretch reads IIDKGKEDKENRD. 2 disordered regions span residues 2781–3047 and 3113–3136; these read IIDK…GVDP and QQRA…MDPV. Positions 2794–2813 are enriched in polar residues; it reads QSAQCTVSKTNDSTEQNVSD. Over residues 2815 to 2849 the composition is skewed to low complexity; the sequence is TPMPDSYPTTPSSTDAPTSESKETLGTLQPSQQQP. Threonine 2828 carries the post-translational modification Phosphothreonine. Polar residues-rich tracts occupy residues 2895-2912, 2924-2941, and 2954-2967; these read AETT…TSLS, AVSS…SLAS, and AGSS…SSTP. Phosphoserine is present on residues serine 2903, serine 2910, serine 2912, serine 2938, serine 2964, and serine 2965. Threonine 2966 carries the post-translational modification Phosphothreonine. Residues 2990 to 3009 show a composition bias toward low complexity; the sequence is PPEDSSPPASSESSSTRDSA. Serine 2995 bears the Phosphoserine mark. Phosphoserine occurs at positions 3193, 3194, 3199, 3204, and 3212. Position 3226 is an omega-N-methylarginine (arginine 3226). 5 disordered regions span residues 3320 to 3343, 3431 to 3458, 3482 to 3501, 3548 to 3590, and 3615 to 3642; these read PKLS…SHEN, QRTK…SQSS, GKNS…ETSL, SEVQ…TTPV, and TPTT…EGGS. The segment covering 3432 to 3446 has biased composition (basic and acidic residues); that stretch reads RTKETNCESDRERGS. Low complexity predominate over residues 3447-3458; it reads KQACSPCSSQSS. 2 stretches are compositionally biased toward low complexity: residues 3552 to 3579 and 3615 to 3628; these read TNSS…ATAP and TPTT…TSTT. Residues serine 3633, serine 3740, serine 3830, serine 3835, serine 3837, and serine 3838 each carry the phosphoserine modification. The segment at 3815–3836 is disordered; that stretch reads TRRANKKAKQTGRLGSSGLGSA. Residues 3826 to 3836 show a composition bias toward low complexity; sequence GRLGSSGLGSA. Disordered regions lie at residues 3859 to 3927 and 3974 to 4028; these read EGQR…LPLL and RESK…SSSL. Over residues 3871–3880 the composition is skewed to polar residues; the sequence is TSESSNQSET. Phosphoserine is present on residues serine 3887, serine 3895, and serine 3907. The segment covering 3894–3905 has biased composition (polar residues); it reads PSPSAQDTQSIV. At threonine 3910 the chain carries Phosphothreonine. 2 stretches are compositionally biased toward basic and acidic residues: residues 3913–3922 and 3974–3995; these read GEKEKEERPP and RESK…KDEP. Serine 3986 and serine 3999 each carry phosphoserine. The span at 3996-4005 shows a compositional bias: pro residues; it reads PPLSPAPLTP. Phosphothreonine occurs at positions 4004 and 4007. The segment covering 4018–4028 has biased composition (polar residues); that stretch reads EPSSMHISSSL. Positions 4118 to 4454 constitute an HECT domain; the sequence is SPEEMKNRLY…QECSEGFGLA (337 aa). Tyrosine 4351 is subject to Phosphotyrosine. Catalysis depends on cysteine 4421, which acts as the Glycyl thioester intermediate.

It belongs to the UPL family. TOM1/PTR1 subfamily. Interacts with isoform p14ARF of CDKN2A which strongly inhibits HUWE1 ubiquitin ligase activity. Interacts with MYCN, POLB and CDC6. Interacts with isoform 2 of PA2G4. Interacts with NR1D1. Interacts with AMBRA1. Interacts with HAPSTR1. Interacts with HAPSTR2. In hepatocytes, interacts with PAQR3; the interaction promotes PPARA poylubiquitination and STUB1-mediated degradation. Post-translationally, phosphorylated on tyrosine, phosphorylation is probably required for its ability to inhibit TP53 transactivation. In terms of tissue distribution, widely expressed.

The protein resides in the cytoplasm. Its subcellular location is the nucleus. It localises to the mitochondrion. The catalysed reaction is S-ubiquitinyl-[E2 ubiquitin-conjugating enzyme]-L-cysteine + [acceptor protein]-L-lysine = [E2 ubiquitin-conjugating enzyme]-L-cysteine + N(6)-ubiquitinyl-[acceptor protein]-L-lysine.. Its pathway is protein modification; protein ubiquitination. E3 ubiquitin-protein ligase which mediates ubiquitination and subsequent proteasomal degradation of target proteins. Regulates apoptosis by catalyzing the polyubiquitination and degradation of MCL1. Mediates monoubiquitination of DNA polymerase beta (POLB) at 'Lys-41', 'Lys-61' and 'Lys-81', thereby playing a role in base-excision repair. Also ubiquitinates the p53/TP53 tumor suppressor and core histones including H1, H2A, H2B, H3 and H4. Ubiquitinates MFN2 to negatively regulate mitochondrial fusion in response to decreased stearoylation of TFRC. Ubiquitination of MFN2 also takes place following induction of mitophagy; AMBRA1 acts as a cofactor for HUWE1-mediated ubiquitination. Regulates neural differentiation and proliferation by catalyzing the polyubiquitination and degradation of MYCN. May regulate abundance of CDC6 after DNA damage by polyubiquitinating and targeting CDC6 to degradation. Mediates polyubiquitination of PA2G4. Acts in concert with MYCBP2 to regulate the circadian clock gene expression by promoting the lithium-induced ubiquination and degradation of NR1D1. Binds to an upstream initiator-like sequence in the preprodynorphin gene. Mediates HAPSTR1 degradation, but is also a required cofactor in the pathway by which HAPSTR1 governs stress signaling. Acts as a regulator of the JNK and NF-kappa-B signaling pathways by mediating assembly of heterotypic 'Lys-63'-/'Lys-48'-linked branched ubiquitin chains that are then recognized by TAB2: HUWE1 mediates branching of 'Lys-48'-linked chains of substrates initially modified with 'Lys-63'-linked conjugates by TRAF6. 'Lys-63'-/'Lys-48'-linked branched ubiquitin chains protect 'Lys-63'-linkages from CYLD deubiquitination. Ubiquitinates PPARA in hepatocytes. The sequence is that of E3 ubiquitin-protein ligase HUWE1 (Huwe1) from Rattus norvegicus (Rat).